A 197-amino-acid chain; its full sequence is Holliday junction branch migration complex subunit RuvA (197 aa).

The interval 1-63 (MFEYLNGKLV…EDAHSLYGFV (63 aa)) is domain I. The tract at residues 64–142 (NESEKALFLR…ATGAVGISLL (79 aa)) is domain II. The interval 142 to 146 (LDAAP) is flexible linker. The segment at 147 to 197 (ASNLALEEAIEALQALGYKATELKKIEKKLAQEAGLTSEEYIKSALKLMMK) is domain III.

It belongs to the RuvA family. In terms of assembly, homotetramer. Forms an RuvA(8)-RuvB(12)-Holliday junction (HJ) complex. HJ DNA is sandwiched between 2 RuvA tetramers; dsDNA enters through RuvA and exits via RuvB. An RuvB hexamer assembles on each DNA strand where it exits the tetramer. Each RuvB hexamer is contacted by two RuvA subunits (via domain III) on 2 adjacent RuvB subunits; this complex drives branch migration. In the full resolvosome a probable DNA-RuvA(4)-RuvB(12)-RuvC(2) complex forms which resolves the HJ.

The protein resides in the cytoplasm. In terms of biological role, the RuvA-RuvB-RuvC complex processes Holliday junction (HJ) DNA during genetic recombination and DNA repair, while the RuvA-RuvB complex plays an important role in the rescue of blocked DNA replication forks via replication fork reversal (RFR). RuvA specifically binds to HJ cruciform DNA, conferring on it an open structure. The RuvB hexamer acts as an ATP-dependent pump, pulling dsDNA into and through the RuvAB complex. HJ branch migration allows RuvC to scan DNA until it finds its consensus sequence, where it cleaves and resolves the cruciform DNA. The sequence is that of Holliday junction branch migration complex subunit RuvA from Lactococcus lactis subsp. cremoris (strain MG1363).